Reading from the N-terminus, the 64-residue chain is Large ribosomal subunit protein bL28 (64 aa).

The interval 1–27 (MAKRDQLTGKGPLSGNTRSHAMNHSKR) is disordered.

This sequence belongs to the bacterial ribosomal protein bL28 family.

The chain is Large ribosomal subunit protein bL28 from Ureaplasma parvum serovar 3 (strain ATCC 27815 / 27 / NCTC 11736).